The primary structure comprises 339 residues: Heat-inducible transcription repressor HrcA (339 aa).

The protein belongs to the HrcA family.

Its function is as follows. Negative regulator of class I heat shock genes (grpE-dnaK-dnaJ and groELS operons). Prevents heat-shock induction of these operons. The sequence is that of Heat-inducible transcription repressor HrcA from Parafrankia sp. (strain EAN1pec).